The sequence spans 951 residues: Valine--tRNA ligase (951 aa).

Residues 42–52 (PNVTGSLHMGH) carry the 'HIGH' region motif. A 'KMSKS' region motif is present at residues 554–558 (KMSKS). K557 contacts ATP. Residues 880-944 (AGLINKEDEL…AEAKAKLIEQ (65 aa)) are a coiled coil.

The protein belongs to the class-I aminoacyl-tRNA synthetase family. ValS type 1 subfamily. Monomer.

It is found in the cytoplasm. It catalyses the reaction tRNA(Val) + L-valine + ATP = L-valyl-tRNA(Val) + AMP + diphosphate. In terms of biological role, catalyzes the attachment of valine to tRNA(Val). As ValRS can inadvertently accommodate and process structurally similar amino acids such as threonine, to avoid such errors, it has a 'posttransfer' editing activity that hydrolyzes mischarged Thr-tRNA(Val) in a tRNA-dependent manner. This chain is Valine--tRNA ligase, found in Shigella dysenteriae serotype 1 (strain Sd197).